We begin with the raw amino-acid sequence, 385 residues long: NifS/IcsS protein homolog (385 aa).

Residues 69–70 (GT), Asn149, Gln178, and 199–201 (SSH) each bind pyridoxal 5'-phosphate. Lys202 is modified (N6-(pyridoxal phosphate)lysine). A pyridoxal 5'-phosphate-binding site is contributed by Thr237. Residue Cys325 is the Cysteine persulfide intermediate of the active site. Position 325 (Cys325) interacts with [2Fe-2S] cluster.

This sequence belongs to the class-V pyridoxal-phosphate-dependent aminotransferase family. NifS/IscS subfamily. Requires pyridoxal 5'-phosphate as cofactor.

The protein is NifS/IcsS protein homolog of Lactobacillus delbrueckii subsp. bulgaricus (strain ATCC 11842 / DSM 20081 / BCRC 10696 / JCM 1002 / NBRC 13953 / NCIMB 11778 / NCTC 12712 / WDCM 00102 / Lb 14).